The sequence spans 574 residues: Aspartate--tRNA ligase (574 aa).

L-aspartate is bound at residue Glu-172. The tract at residues 196 to 199 (QIFK) is aspartate. Arg-218 is an L-aspartate binding site. ATP-binding positions include 218–220 (RDE) and Gln-227. An L-aspartate-binding site is contributed by His-453. Glu-487 is an ATP binding site. Position 494 (Arg-494) interacts with L-aspartate. 539 to 542 (GLDR) lines the ATP pocket.

This sequence belongs to the class-II aminoacyl-tRNA synthetase family. Type 1 subfamily. As to quaternary structure, homodimer.

The protein localises to the cytoplasm. The catalysed reaction is tRNA(Asp) + L-aspartate + ATP = L-aspartyl-tRNA(Asp) + AMP + diphosphate. Catalyzes the attachment of L-aspartate to tRNA(Asp) in a two-step reaction: L-aspartate is first activated by ATP to form Asp-AMP and then transferred to the acceptor end of tRNA(Asp). This is Aspartate--tRNA ligase from Blochmanniella pennsylvanica (strain BPEN).